Consider the following 281-residue polypeptide: MKRVGAHVSIAGGVENAPLNAQKIGAKAFAMFTRNQRQWHSAPLSTASIEAFRRNCEEAGFLPQHILPHDSYLINLGAPEVEKLEKSRKAFTTEMQRAEALGLTMLNFHPGSHLNLVSENECLATIAESVNLSLNATAGVTAVIENTAGQGSNLGWRFEHLARIIELVEDKSRVGVCLDTCHLFASGYDLRTPEAFDATLAEFDRVVGLSYLRGMHLNDAKQKLGSRVDRHACIGEGMIGREAFVHLMQHPAMEEIPLILETPNSESWAEEIEMLYSFEKE.

Zn(2+) contacts are provided by H69, H109, E145, D179, H182, H216, D229, H231, and E261.

It belongs to the AP endonuclease 2 family. The cofactor is Zn(2+).

It catalyses the reaction Endonucleolytic cleavage to 5'-phosphooligonucleotide end-products.. Functionally, endonuclease IV plays a role in DNA repair. It cleaves phosphodiester bonds at apurinic or apyrimidinic (AP) sites, generating a 3'-hydroxyl group and a 5'-terminal sugar phosphate. The sequence is that of Probable endonuclease 4 from Chlorobaculum parvum (strain DSM 263 / NCIMB 8327) (Chlorobium vibrioforme subsp. thiosulfatophilum).